Consider the following 508-residue polypeptide: Photosystem II CP47 reaction center protein (508 aa).

6 helical membrane-spanning segments follow: residues 21–36 (SVHI…WAGS), 101–115 (IVFS…IWHW), 140–156 (GIHL…FGAF), 203–218 (IAAG…FHLS), 237–252 (VLSS…AFVV), and 457–472 (SFAL…HGAR).

It belongs to the PsbB/PsbC family. PsbB subfamily. As to quaternary structure, PSII is composed of 1 copy each of membrane proteins PsbA, PsbB, PsbC, PsbD, PsbE, PsbF, PsbH, PsbI, PsbJ, PsbK, PsbL, PsbM, PsbT, PsbX, PsbY, PsbZ, Psb30/Ycf12, at least 3 peripheral proteins of the oxygen-evolving complex and a large number of cofactors. It forms dimeric complexes. Requires Binds multiple chlorophylls. PSII binds additional chlorophylls, carotenoids and specific lipids. as cofactor.

Its subcellular location is the plastid. The protein resides in the chloroplast thylakoid membrane. Functionally, one of the components of the core complex of photosystem II (PSII). It binds chlorophyll and helps catalyze the primary light-induced photochemical processes of PSII. PSII is a light-driven water:plastoquinone oxidoreductase, using light energy to abstract electrons from H(2)O, generating O(2) and a proton gradient subsequently used for ATP formation. The polypeptide is Photosystem II CP47 reaction center protein (Carica papaya (Papaya)).